Consider the following 151-residue polypeptide: Putative membrane protein ORF10 (151 aa).

Helical transmembrane passes span 7 to 23 (LCLA…GVVV) and 107 to 123 (GLVA…IIMY).

Its subcellular location is the membrane. The chain is Putative membrane protein ORF10 (ORF10) from Ictalurid herpesvirus 1 (strain Auburn) (IcHV-1).